The following is a 331-amino-acid chain: MQDYIERVTGGADLTVEEARDAARAVFEDATEAQIGALLAALRAKGETEAEIAGFAQGMRDAALTIEPDRGPLVDTCGTGGDDYNTINVSTTSALVAAGAGAAVAKHGNYSVSSSSGSADVLEVAGVNVEAEPESVEACIEDNGVGFMLAPVFHPAMKAVIGPRKELGMRTVFNVLGPLTNPAGADAQVLGVYDADLVPVIAESLSHMPVERALVVHGSGMDEIALHDATTVAEIDGDEITEYTLTPADLGLERAPIEAVAGGTPQENADDLEGILTGDVTGPKRDLILANAGAAIYVAGLADSLEGGVEVARDAIDSGAAKAKHDALREA.

5-phospho-alpha-D-ribose 1-diphosphate-binding positions include Gly78, 81–82 (GD), Thr86, 88–91 (NVST), 106–114 (KHGNYSVSS), and Ser118. Gly78 contributes to the anthranilate binding site. Ser90 lines the Mg(2+) pocket. Position 109 (Asn109) interacts with anthranilate. Residue Arg164 participates in anthranilate binding. 2 residues coordinate Mg(2+): Asp222 and Glu223.

This sequence belongs to the anthranilate phosphoribosyltransferase family. In terms of assembly, homodimer. Mg(2+) serves as cofactor.

The enzyme catalyses N-(5-phospho-beta-D-ribosyl)anthranilate + diphosphate = 5-phospho-alpha-D-ribose 1-diphosphate + anthranilate. The protein operates within amino-acid biosynthesis; L-tryptophan biosynthesis; L-tryptophan from chorismate: step 2/5. In terms of biological role, catalyzes the transfer of the phosphoribosyl group of 5-phosphorylribose-1-pyrophosphate (PRPP) to anthranilate to yield N-(5'-phosphoribosyl)-anthranilate (PRA). The protein is Anthranilate phosphoribosyltransferase of Haloferax volcanii (strain ATCC 29605 / DSM 3757 / JCM 8879 / NBRC 14742 / NCIMB 2012 / VKM B-1768 / DS2) (Halobacterium volcanii).